The following is a 198-amino-acid chain: V-type proton ATPase subunit E (198 aa).

The protein belongs to the V-ATPase E subunit family.

In terms of biological role, produces ATP from ADP in the presence of a proton gradient across the membrane. In Borrelia hermsii (strain HS1 / DAH), this protein is V-type proton ATPase subunit E.